The following is a 310-amino-acid chain: Acetyl-coenzyme A carboxylase carboxyl transferase subunit beta (310 aa).

The CoA carboxyltransferase N-terminal domain occupies 27-296; sequence LWKKCPKCSA…PEFENEEELE (270 aa). Zn(2+)-binding residues include Cys31, Cys34, Cys50, and Cys53. The C4-type zinc finger occupies 31–53; sequence CPKCSAVLYRPELEKNLDVCPKC. Positions 285-310 are disordered; that stretch reads PEPEFENEEELEEEEMERPEPPDNVE. A compositionally biased stretch (acidic residues) spans 287–310; it reads PEFENEEELEEEEMERPEPPDNVE.

Belongs to the AccD/PCCB family. In terms of assembly, acetyl-CoA carboxylase is a heterohexamer composed of biotin carboxyl carrier protein (AccB), biotin carboxylase (AccC) and two subunits each of ACCase subunit alpha (AccA) and ACCase subunit beta (AccD). Requires Zn(2+) as cofactor.

The protein resides in the cytoplasm. It catalyses the reaction N(6)-carboxybiotinyl-L-lysyl-[protein] + acetyl-CoA = N(6)-biotinyl-L-lysyl-[protein] + malonyl-CoA. It participates in lipid metabolism; malonyl-CoA biosynthesis; malonyl-CoA from acetyl-CoA: step 1/1. Its function is as follows. Component of the acetyl coenzyme A carboxylase (ACC) complex. Biotin carboxylase (BC) catalyzes the carboxylation of biotin on its carrier protein (BCCP) and then the CO(2) group is transferred by the transcarboxylase to acetyl-CoA to form malonyl-CoA. This is Acetyl-coenzyme A carboxylase carboxyl transferase subunit beta from Hahella chejuensis (strain KCTC 2396).